The sequence spans 386 residues: Alkanesulfonate monooxygenase (386 aa).

Belongs to the SsuD family.

It carries out the reaction an alkanesulfonate + FMNH2 + O2 = an aldehyde + FMN + sulfite + H2O + 2 H(+). Functionally, catalyzes the desulfonation of aliphatic sulfonates. The polypeptide is Alkanesulfonate monooxygenase (Paraburkholderia phytofirmans (strain DSM 17436 / LMG 22146 / PsJN) (Burkholderia phytofirmans)).